We begin with the raw amino-acid sequence, 171 residues long: Crossover junction endodeoxyribonuclease RuvC (171 aa).

Active-site residues include D7, E74, and D147. The Mg(2+) site is built by D7, E74, and D147.

The protein belongs to the RuvC family. As to quaternary structure, homodimer which binds Holliday junction (HJ) DNA. The HJ becomes 2-fold symmetrical on binding to RuvC with unstacked arms; it has a different conformation from HJ DNA in complex with RuvA. In the full resolvosome a probable DNA-RuvA(4)-RuvB(12)-RuvC(2) complex forms which resolves the HJ. Mg(2+) serves as cofactor.

It localises to the cytoplasm. It catalyses the reaction Endonucleolytic cleavage at a junction such as a reciprocal single-stranded crossover between two homologous DNA duplexes (Holliday junction).. In terms of biological role, the RuvA-RuvB-RuvC complex processes Holliday junction (HJ) DNA during genetic recombination and DNA repair. Endonuclease that resolves HJ intermediates. Cleaves cruciform DNA by making single-stranded nicks across the HJ at symmetrical positions within the homologous arms, yielding a 5'-phosphate and a 3'-hydroxyl group; requires a central core of homology in the junction. The consensus cleavage sequence is 5'-(A/T)TT(C/G)-3'. Cleavage occurs on the 3'-side of the TT dinucleotide at the point of strand exchange. HJ branch migration catalyzed by RuvA-RuvB allows RuvC to scan DNA until it finds its consensus sequence, where it cleaves and resolves the cruciform DNA. The chain is Crossover junction endodeoxyribonuclease RuvC from Acidobacterium capsulatum (strain ATCC 51196 / DSM 11244 / BCRC 80197 / JCM 7670 / NBRC 15755 / NCIMB 13165 / 161).